We begin with the raw amino-acid sequence, 247 residues long: 23S rRNA (guanosine-2'-O-)-methyltransferase RlmB (247 aa).

The S-adenosyl-L-methionine site is built by Gly197, Ile217, and Leu226.

The protein belongs to the class IV-like SAM-binding methyltransferase superfamily. RNA methyltransferase TrmH family. RlmB subfamily.

Its subcellular location is the cytoplasm. It carries out the reaction guanosine(2251) in 23S rRNA + S-adenosyl-L-methionine = 2'-O-methylguanosine(2251) in 23S rRNA + S-adenosyl-L-homocysteine + H(+). In terms of biological role, specifically methylates the ribose of guanosine 2251 in 23S rRNA. In Vibrio cholerae serotype O1 (strain ATCC 39315 / El Tor Inaba N16961), this protein is 23S rRNA (guanosine-2'-O-)-methyltransferase RlmB.